Reading from the N-terminus, the 192-residue chain is dTTP/UTP pyrophosphatase (192 aa).

The active-site Proton acceptor is the aspartate 72.

Belongs to the Maf family. YhdE subfamily. A divalent metal cation serves as cofactor.

The protein localises to the cytoplasm. It carries out the reaction dTTP + H2O = dTMP + diphosphate + H(+). The catalysed reaction is UTP + H2O = UMP + diphosphate + H(+). In terms of biological role, nucleoside triphosphate pyrophosphatase that hydrolyzes dTTP and UTP. May have a dual role in cell division arrest and in preventing the incorporation of modified nucleotides into cellular nucleic acids. The chain is dTTP/UTP pyrophosphatase from Hydrogenovibrio crunogenus (strain DSM 25203 / XCL-2) (Thiomicrospira crunogena).